The chain runs to 466 residues: Coagulation factor IX (466 aa).

A signal peptide spans 1 to 25 (MRCLNMIMAEPPGLITICLLGYLLG). The propeptide occupies 26 to 46 (ADCTVFLDHEDATKVLSRPKR). Tyr-47, Asn-48, Glu-53, Glu-54, Glu-61, Glu-63, Glu-66, Glu-67, Glu-72, Glu-73, and Glu-76 together coordinate Ca(2+). One can recognise a Gla domain in the interval 47 to 92 (YNSGKLEEFVQGNLERECMEEKCSFEEAREVFENTEKTTEFWKQYV). Glu-53, Glu-54, Glu-61, Glu-63, Glu-66, Glu-67, Glu-72, Glu-73, Glu-76, Glu-79, and Glu-82 each carry 4-carboxyglutamate. Glu-61 contributes to the Mg(2+) binding site. Cysteines 64 and 69 form a disulfide. Glu-66 provides a ligand contact to Mg(2+). A Mg(2+)-binding site is contributed by Glu-72. Position 76 (Glu-76) interacts with Mg(2+). Residue Glu-82 coordinates Ca(2+). A Mg(2+)-binding site is contributed by Glu-82. An O-linked (GalNAc...) threonine glycan is attached at Thr-85. Positions 86, 93, 94, and 96 each coordinate Ca(2+). At Glu-86 the chain carries 4-carboxyglutamate. Glu-86 contributes to the Mg(2+) binding site. In terms of domain architecture, EGF-like 1; calcium-binding spans 93–129 (DGDQCESNPCLNGGICKDDINSYECWCQTGFEGKNCE). Intrachain disulfides connect Cys-97/Cys-108, Cys-102/Cys-117, Cys-119/Cys-128, Cys-134/Cys-145, Cys-141/Cys-155, Cys-157/Cys-170, Cys-178/Cys-340, Cys-257/Cys-273, Cys-387/Cys-401, and Cys-412/Cys-440. A glycan (O-linked (Glc...) serine) is linked at Ser-99. Ca(2+)-binding residues include Asp-110 and Asp-111. Asp-110 is modified ((3R)-3-hydroxyaspartate). Ser-114 bears the Phosphoserine mark. Residues 130 to 171 (LDVTCNIKNGRCKQFCKLDADNKVVCSCTTGYQLAEDQKSCE) form the EGF-like 2 domain. A propeptide spans 193–231 (AETLFLNMDYENSTTDYENSAEAEKNVDNVTQPLNDLTR) (activation peptide). Tyr-202 bears the Sulfotyrosine mark. Ser-205 is subject to Phosphoserine. The residue at position 206 (Thr-206) is a Phosphothreonine; alternate. Thr-206 is a glycosylation site (O-linked (GalNAc...) threonine; alternate). Asn-221 carries an N-linked (GlcNAc...) asparagine glycan. O-linked (GalNAc...) threonine glycosylation is found at Thr-223 and Thr-230. A Peptidase S1 domain is found at 232–464 (IVGGKTAKPG…YVNWIKEKTK (233 aa)). His-272 functions as the Charge relay system in the catalytic mechanism. Positions 286, 288, 291, 293, and 296 each coordinate Ca(2+). Asp-320 serves as the catalytic Charge relay system. The active-site Charge relay system is the Ser-416.

Belongs to the peptidase S1 family. As to quaternary structure, heterodimer of a light chain and a heavy chain; disulfide-linked. Interacts (inactive and activated) with F11 (activated) in calcium-dependent manner. Interacts with SERPINC1. Post-translationally, the iron and 2-oxoglutarate dependent 3-hydroxylation of aspartate and asparagine is (R) stereospecific within EGF domains. Activated by factor XIa, which excises the activation peptide. The propeptide can also be removed by snake venom protease. Activated by coagulation factor VIIa-tissue factor (F7-F3) complex in calcium-dependent manner. In terms of processing, predominantly O-glucosylated at Ser-99 by POGLUT1 in vitro.

It is found in the secreted. It catalyses the reaction Selective cleavage of Arg-|-Ile bond in factor X to form factor Xa.. Its function is as follows. Factor IX is a vitamin K-dependent plasma protein that participates in the intrinsic pathway of blood coagulation by converting factor X to its active form in the presence of Ca(2+) ions, phospholipids, and factor VIIIa. This Felis catus (Cat) protein is Coagulation factor IX (F9).